The following is a 275-amino-acid chain: MPIVRAKPTSPGRRFVEKVVHPHLYKGRPFAALLESKSKTGGRNNNGRITTRHIGGGHKQHYRIIDFKRTKDNIPATVERIEYDPNRTAHIALLKYADGERRYIIAAKKQAVGDTVMSGELSPIRPGNCLPLKNIPLGTVIHNIELKIGKGAQMARAAGASVQLLGRDGIYAILRLRSGETRRVHVNCRAVIGEVSNTENNLKSLGKAGASRWRGIRPSVRGVAMNPVDHPHGGGEGRNKGRHPTSPWGQKSKGLKTRHNKRTDNMIIRRRAKKK.

A disordered region spans residues 222-275 (GVAMNPVDHPHGGGEGRNKGRHPTSPWGQKSKGLKTRHNKRTDNMIIRRRAKKK). Residues 229 to 239 (DHPHGGGEGRN) are compositionally biased toward basic and acidic residues.

Belongs to the universal ribosomal protein uL2 family. Part of the 50S ribosomal subunit. Forms a bridge to the 30S subunit in the 70S ribosome.

In terms of biological role, one of the primary rRNA binding proteins. Required for association of the 30S and 50S subunits to form the 70S ribosome, for tRNA binding and peptide bond formation. It has been suggested to have peptidyltransferase activity; this is somewhat controversial. Makes several contacts with the 16S rRNA in the 70S ribosome. The protein is Large ribosomal subunit protein uL2 of Psychrobacter cryohalolentis (strain ATCC BAA-1226 / DSM 17306 / VKM B-2378 / K5).